We begin with the raw amino-acid sequence, 295 residues long: 4-diphosphocytidyl-2-C-methyl-D-erythritol kinase (295 aa).

The active site involves Lys-22. 106–116 (PAGGGFGGGSS) lines the ATP pocket. Asp-148 is a catalytic residue.

This sequence belongs to the GHMP kinase family. IspE subfamily.

The enzyme catalyses 4-CDP-2-C-methyl-D-erythritol + ATP = 4-CDP-2-C-methyl-D-erythritol 2-phosphate + ADP + H(+). It participates in isoprenoid biosynthesis; isopentenyl diphosphate biosynthesis via DXP pathway; isopentenyl diphosphate from 1-deoxy-D-xylulose 5-phosphate: step 3/6. Its function is as follows. Catalyzes the phosphorylation of the position 2 hydroxy group of 4-diphosphocytidyl-2C-methyl-D-erythritol. In Xanthomonas campestris pv. campestris (strain 8004), this protein is 4-diphosphocytidyl-2-C-methyl-D-erythritol kinase.